The following is a 286-amino-acid chain: P2R1A-PPP2R2A-interacting phosphatase regulator 1 (286 aa).

The segment at 1–46 (MAQEKMELDLELPAGTGASPAEGGGPGSGGLRRSNSAPLIHGLSDS) is disordered. Ser-34 carries the phosphoserine modification. Residue Ser-36 is modified to Phosphoserine; by CHEK1. Phosphoserine occurs at positions 44, 47, 61, and 75. Lys-88 is covalently cross-linked (Glycyl lysine isopeptide (Lys-Gly) (interchain with G-Cter in SUMO1)). Phosphoserine is present on residues Ser-142 and Ser-146. The residue at position 148 (Thr-148) is a Phosphothreonine. Residues 166 to 187 (SNGLPPSPIPSPTTRFTTRRSQ) are disordered. Low complexity predominate over residues 177–187 (PTTRFTTRRSQ). 2 positions are modified to phosphoserine: Ser-186 and Ser-188. Positions 238–286 (VSSDTLDGNSSSAGSSCNSPAKVSTTTDSPVSPAQAASPFIPVDELSSK) are disordered. Low complexity predominate over residues 245–256 (GNSSSAGSSCNS). Residues 258–269 (AKVSTTTDSPVS) show a composition bias toward polar residues. Phosphoserine occurs at positions 266, 269, and 275.

It belongs to the FAM122 family. Interacts with PPP2CA and PPP2R1A. Interacts (via its N-terminus) with PPP2R2A; the interaction is direct and this interaction inhibits PP2A activity. The CHEK1-mediated Ser-36 phosphorylated form interacts with 14-3-3 proteins. Post-translationally, CHEK1-mediated phosphorylation at Ser-36 negatively regulates its ability to inhibit serine/threonine-protein phosphatase 2A (PP2A) activity. Phosphorylation leads to its release from the PP2A complex and its sequestration by 14-3-3 proteins in the cytoplasm resulting in its inability to translocate to the nucleus, where it otherwise inhibits PP2A.

Its subcellular location is the nucleus. The protein localises to the cytoplasm. Functionally, acts as an inhibitor of serine/threonine-protein phosphatase 2A (PP2A) activity. Inhibits PP2A activity by blocking the substrate binding site on PPP2R2A and the active site of PPP2CA. Potentiates ubiquitin-mediated proteasomal degradation of serine/threonine-protein phosphatase 2A catalytic subunit alpha (PPP2CA). Inhibits PP2A-mediated dephosphorylation of WEE1, promoting ubiquitin-mediated proteolysis of WEE1, thereby releasing G2/M checkpoint. The chain is P2R1A-PPP2R2A-interacting phosphatase regulator 1 from Rattus norvegicus (Rat).